Consider the following 402-residue polypeptide: DNA polymerase IV (402 aa).

The UmuC domain occupies 5–187; that stretch reads ILLADMNSFY…LPVRELFGVG (183 aa). Mg(2+) is bound by residues Asp9 and Asp105. Glu106 is a catalytic residue.

This sequence belongs to the DNA polymerase type-Y family. Monomer. The cofactor is Mg(2+).

It localises to the cytoplasm. It carries out the reaction DNA(n) + a 2'-deoxyribonucleoside 5'-triphosphate = DNA(n+1) + diphosphate. Poorly processive, error-prone DNA polymerase involved in untargeted mutagenesis. Copies undamaged DNA at stalled replication forks, which arise in vivo from mismatched or misaligned primer ends. These misaligned primers can be extended by PolIV. Exhibits no 3'-5' exonuclease (proofreading) activity. May be involved in translesional synthesis, in conjunction with the beta clamp from PolIII. The sequence is that of DNA polymerase IV from Pelotomaculum thermopropionicum (strain DSM 13744 / JCM 10971 / SI).